The following is a 157-amino-acid chain: Transcription elongation factor GreA (157 aa).

A coiled-coil region spans residues 46 to 73 (AEYHSARERQSFIEGRIAELEEIISAAE).

The protein belongs to the GreA/GreB family.

Functionally, necessary for efficient RNA polymerase transcription elongation past template-encoded arresting sites. The arresting sites in DNA have the property of trapping a certain fraction of elongating RNA polymerases that pass through, resulting in locked ternary complexes. Cleavage of the nascent transcript by cleavage factors such as GreA or GreB allows the resumption of elongation from the new 3'terminus. GreA releases sequences of 2 to 3 nucleotides. The protein is Transcription elongation factor GreA of Acidiphilium cryptum (strain JF-5).